The sequence spans 422 residues: Serine--tRNA ligase (422 aa).

229–231 lines the L-serine pocket; it reads TAE. 258–260 is an ATP binding site; it reads RRE. Glu-281 contributes to the L-serine binding site. Position 345–348 (345–348) interacts with ATP; sequence EISS. Position 379 (Ser-379) interacts with L-serine.

This sequence belongs to the class-II aminoacyl-tRNA synthetase family. Type-1 seryl-tRNA synthetase subfamily. As to quaternary structure, homodimer. The tRNA molecule binds across the dimer.

It is found in the cytoplasm. The enzyme catalyses tRNA(Ser) + L-serine + ATP = L-seryl-tRNA(Ser) + AMP + diphosphate + H(+). The catalysed reaction is tRNA(Sec) + L-serine + ATP = L-seryl-tRNA(Sec) + AMP + diphosphate + H(+). It functions in the pathway aminoacyl-tRNA biosynthesis; selenocysteinyl-tRNA(Sec) biosynthesis; L-seryl-tRNA(Sec) from L-serine and tRNA(Sec): step 1/1. Catalyzes the attachment of serine to tRNA(Ser). Is also able to aminoacylate tRNA(Sec) with serine, to form the misacylated tRNA L-seryl-tRNA(Sec), which will be further converted into selenocysteinyl-tRNA(Sec). This is Serine--tRNA ligase from Methanosarcina mazei (strain ATCC BAA-159 / DSM 3647 / Goe1 / Go1 / JCM 11833 / OCM 88) (Methanosarcina frisia).